The chain runs to 111 residues: Large ribosomal subunit protein P2-2 (111 aa).

Residues 86–111 (APAAAAAKKDEPEEEADDDMGFGLFD) are disordered.

The protein belongs to the eukaryotic ribosomal protein P1/P2 family. P1 and P2 exist as dimers at the large ribosomal subunit. Post-translationally, phosphorylated.

Its function is as follows. Plays an important role in the elongation step of protein synthesis. The protein is Large ribosomal subunit protein P2-2 (LIP') of Leishmania infantum.